Here is a 99-residue protein sequence, read N- to C-terminus: CLAVATA3/ESR (CLE)-related protein 11 (99 aa).

The signal sequence occupies residues 1–31; sequence MTKQPKPCSFLFHISLLSALFVFLLISFAFT. P91 and P94 each carry hydroxyproline. A glycan (O-linked (Ara...) hydroxyproline) is linked at P94.

The protein belongs to the CLV3/ESR signal peptide family. The O-glycosylation (arabinosylation) of the hydroxyproline Pro-94 enhances binding affinity of the CLE11p peptide for its receptor. As to expression, mostly expressed in seedlings, roots and siliques, and, to a lower extent, in leaves, flowers, stems and apex.

It is found in the secreted. Its subcellular location is the extracellular space. In terms of biological role, extracellular signal peptide that regulates cell fate. Represses root apical meristem maintenance. Regulates the transition of protophloem cells from proliferation to differentiation, thus impinging on postembryonic growth capacity of the root meristem; this signaling pathway requires CRN and CLV2. The sequence is that of CLAVATA3/ESR (CLE)-related protein 11 from Arabidopsis thaliana (Mouse-ear cress).